The primary structure comprises 258 residues: Tryptophan synthase alpha chain (258 aa).

Residues glutamate 47 and aspartate 58 each act as proton acceptor in the active site.

It belongs to the TrpA family. In terms of assembly, tetramer of two alpha and two beta chains.

The enzyme catalyses (1S,2R)-1-C-(indol-3-yl)glycerol 3-phosphate + L-serine = D-glyceraldehyde 3-phosphate + L-tryptophan + H2O. Its pathway is amino-acid biosynthesis; L-tryptophan biosynthesis; L-tryptophan from chorismate: step 5/5. Its function is as follows. The alpha subunit is responsible for the aldol cleavage of indoleglycerol phosphate to indole and glyceraldehyde 3-phosphate. The sequence is that of Tryptophan synthase alpha chain from Bacillus mycoides (strain KBAB4) (Bacillus weihenstephanensis).